The chain runs to 292 residues: Trimeric intracellular cation channel type B (292 aa).

Residues 1-16 (MEYPWDDLTLAFSRTS) lie on the Lumenal side of the membrane. Residues 17 to 34 (MFPFFDIAHYLVSVMALK) traverse the membrane as a helical segment. The Cytoplasmic portion of the chain corresponds to 35–47 (QRPGAVAAAWNNP). The chain crosses the membrane as a helical span at residues 48 to 69 (LASWLSAMLHCFGGGILSCMLL). Over 70–82 (AESPLKFLTNHTN) the chain is Lumenal. Residues 83–100 (ILLASSIWYIVFFCPRDL) form a helical membrane-spanning segment. Over 101–103 (VSQ) the chain is Cytoplasmic. The helical transmembrane segment at 104-122 (GYSYQPIQFLAAGMKEVTR) threads the bilayer. Positions 118 and 122 each coordinate a 1,2-diacyl-sn-glycero-3-phospho-(1D-myo-inositol-4,5-bisphosphate). Over 123-140 (TWKIVGGVSDANSYYRNA) the chain is Lumenal. A helical transmembrane segment spans residues 141-158 (WIVMIVVGWARGAGGAVV). Residues 159–178 (TACEQLLKGDWKPEGDEWLK) lie on the Cytoplasmic side of the membrane. The chain crosses the membrane as a helical span at residues 179–195 (MSFPCKITLLGSIMFTF). Over 196-206 (QHTRHLAISKH) the chain is Lumenal. The chain crosses the membrane as a helical span at residues 207–225 (DLMFLYTIFLVTIKVTMMM). The Cytoplasmic portion of the chain corresponds to 226–292 (TKDTAVTLTP…GAKRHAKKED (67 aa)). Positions 248–292 (RQQQQFSSSEKKTEVKPSSNGSASSASKRGAEPSGGAKRHAKKED) are disordered. Residues 265-274 (SSNGSASSAS) show a composition bias toward low complexity.

This sequence belongs to the TMEM38 family. Homotrimer; conformation seems to be controled by binding to diacylglycerol (DAG). In terms of tissue distribution, widely expressed.

The protein resides in the endoplasmic reticulum membrane. The enzyme catalyses K(+)(in) = K(+)(out). Channel activity is activated by increased cytosolic Ca(2+) levels and blocked by luminal high Ca(2+) levels. In terms of biological role, intracellular monovalent cation channel required for maintenance of rapid intracellular calcium release. Acts as a potassium counter-ion channel that functions in synchronization with calcium release from intracellular stores. Activated by increased cytosolic Ca(2+) levels. The sequence is that of Trimeric intracellular cation channel type B (Tmem38b) from Mus musculus (Mouse).